The primary structure comprises 241 residues: Endothelial protein C receptor (241 aa).

The signal sequence occupies residues M1–C20. The Extracellular portion of the chain corresponds to N21–S213. N-linked (GlcNAc...) asparagine glycans are attached at residues N47, N64, N139, N165, and N175. Residues L214 to L234 traverse the membrane as a helical segment. Topologically, residues C235–C241 are cytoplasmic.

It is found in the membrane. In terms of biological role, binds activated protein C. Enhances protein C activation by the thrombin-thrombomodulin complex; plays a role in the protein C pathway controlling blood coagulation. The polypeptide is Endothelial protein C receptor (Procr) (Rattus norvegicus (Rat)).